The primary structure comprises 200 residues: Acyl-homoserine-lactone synthase (200 aa).

The protein belongs to the autoinducer synthase family.

The catalysed reaction is a fatty acyl-[ACP] + S-adenosyl-L-methionine = an N-acyl-L-homoserine lactone + S-methyl-5'-thioadenosine + holo-[ACP] + H(+). Required for the synthesis of BHL (N-butanoyl-L-homoserine lactone). The polypeptide is Acyl-homoserine-lactone synthase (swrI) (Serratia liquefaciens).